The chain runs to 385 residues: MIKTFPLNSRAKTTALKQPKELFSFARDIDGEYIFDSTKVQDENLSYYYLPDASVDKQIDLGAGYSNFKKIPEEENLGDFPALLKGVMNYEQSTGTKINSDIITFRGLMTKILTLPYNLKDPLDLHVIVYDGQLFIKNNDEIELKRRQQNNQHEDPSKQEMMKKFEYSGYKFEAVSTLPKPWGDCSRQLIEKRNKKVVNNYEQYISVVKTGIGKVKLLLAGEVDCLWDYIPEDGKDILPHYVELKTSKVIEAPGQVVNFEKKLFRTWAQSFLIGIRKIVYGFRDDNLILRNVEVYNTEEIPIMLKDTINVNTKIVCMNALKWYGAVIEWINNEIPKDADKSWSLTYDPGSKSFSIVELMQDSELRNSVITEDFKEWRISLHKTES.

Glu173 lines the a divalent metal cation pocket. Position 222 (Glu222) interacts with substrate. 3 residues coordinate a divalent metal cation: Asp224, Glu243, and Leu244. The substrate site is built by Lys245 and Gln269.

Belongs to the DXO/Dom3Z family. As to quaternary structure, interacts with RAT1; the interaction is direct, stabilizes RAT1 protein structure and stimulates its exoribonuclease activity. The interaction also stimulates RAI1 pyrophosphohydrolase activity, probably by recruiting it to mRNA substrates. The cofactor is a divalent metal cation.

Its subcellular location is the nucleus. The enzyme catalyses a 5'-end NAD(+)-phospho-ribonucleoside in mRNA + H2O = a 5'-end phospho-ribonucleoside in mRNA + NAD(+) + H(+). It carries out the reaction a 5'-end (N(7)-methyl 5'-triphosphoguanosine)-ribonucleoside-ribonucleotide in mRNA + H2O = a (N(7)-methyl 5'-triphosphoguanosine)-nucleoside + a 5'-end phospho-ribonucleoside in mRNA + H(+). The catalysed reaction is a 5'-end triphospho-ribonucleoside in mRNA + H2O = a 5'-end phospho-ribonucleoside in mRNA + diphosphate + H(+). In terms of biological role, decapping enzyme for NAD-capped RNAs: specifically hydrolyzes the nicotinamide adenine dinucleotide (NAD) cap from a subset of RNAs by removing the entire NAD moiety from the 5'-end of an NAD-capped RNA. The NAD-cap is present at the 5'-end of some RNAs and snoRNAs. In contrast to the canonical 5'-end N7 methylguanosine (m7G) cap, the NAD cap promotes mRNA decay. Also acts as a non-canonical decapping enzyme that removes the entire cap structure of m7G capped or incompletely capped RNAs. Has decapping activity toward incomplete 5'-end m7G cap mRNAs such as unmethylated 5'-end-capped RNA (cap0), while it has no activity toward 2'-O-ribose methylated m7G cap (cap1). Also possesses RNA 5'-pyrophosphohydrolase activity by hydrolyzing the 5'-end triphosphate to release pyrophosphates. Stimulates exoribonuclease activity of Rat1, allowing it to degrade RNAs with stable secondary structure more effectively. This Debaryomyces hansenii (strain ATCC 36239 / CBS 767 / BCRC 21394 / JCM 1990 / NBRC 0083 / IGC 2968) (Yeast) protein is Decapping nuclease RAI1 (RAI1).